Consider the following 65-residue polypeptide: uncharacterized protein (65 aa).

Positions 1–65 (MIALSVCWQI…ETGIGYRFML (65 aa)) form a DNA-binding region, ompR/PhoB-type.

This is an uncharacterized protein from Escherichia coli (strain K12).